Here is a 421-residue protein sequence, read N- to C-terminus: Serine--tRNA ligase (421 aa).

Residue 229–231 (TSE) participates in L-serine binding. Residues 260–262 (RKE) and Val-276 contribute to the ATP site. Position 283 (Glu-283) interacts with L-serine. 347 to 350 (EIVS) serves as a coordination point for ATP. Thr-383 contacts L-serine.

The protein belongs to the class-II aminoacyl-tRNA synthetase family. Type-1 seryl-tRNA synthetase subfamily. In terms of assembly, homodimer. The tRNA molecule binds across the dimer.

Its subcellular location is the cytoplasm. It carries out the reaction tRNA(Ser) + L-serine + ATP = L-seryl-tRNA(Ser) + AMP + diphosphate + H(+). The enzyme catalyses tRNA(Sec) + L-serine + ATP = L-seryl-tRNA(Sec) + AMP + diphosphate + H(+). It functions in the pathway aminoacyl-tRNA biosynthesis; selenocysteinyl-tRNA(Sec) biosynthesis; L-seryl-tRNA(Sec) from L-serine and tRNA(Sec): step 1/1. Its function is as follows. Catalyzes the attachment of serine to tRNA(Ser). Is also able to aminoacylate tRNA(Sec) with serine, to form the misacylated tRNA L-seryl-tRNA(Sec), which will be further converted into selenocysteinyl-tRNA(Sec). This chain is Serine--tRNA ligase, found in Nitrosopumilus maritimus (strain SCM1).